Here is a 396-residue protein sequence, read N- to C-terminus: Probable peptidoglycan glycosyltransferase FtsW (396 aa).

9 helical membrane-spanning segments follow: residues 17 to 37 (FCDG…WVMV), 61 to 81 (VFVL…MAWW), 83 to 103 (ANGP…LVAG), 117 to 137 (GIPL…VYLA), 159 to 179 (MVMA…AVVV), 198 to 218 (FLLL…AEPY), 274 to 294 (FVFA…VIGL), 316 to 336 (FAAY…FINI), and 350 to 370 (LPLL…VGML).

Belongs to the SEDS family. FtsW subfamily.

It is found in the cell inner membrane. It catalyses the reaction [GlcNAc-(1-&gt;4)-Mur2Ac(oyl-L-Ala-gamma-D-Glu-L-Lys-D-Ala-D-Ala)](n)-di-trans,octa-cis-undecaprenyl diphosphate + beta-D-GlcNAc-(1-&gt;4)-Mur2Ac(oyl-L-Ala-gamma-D-Glu-L-Lys-D-Ala-D-Ala)-di-trans,octa-cis-undecaprenyl diphosphate = [GlcNAc-(1-&gt;4)-Mur2Ac(oyl-L-Ala-gamma-D-Glu-L-Lys-D-Ala-D-Ala)](n+1)-di-trans,octa-cis-undecaprenyl diphosphate + di-trans,octa-cis-undecaprenyl diphosphate + H(+). Its pathway is cell wall biogenesis; peptidoglycan biosynthesis. Peptidoglycan polymerase that is essential for cell division. The chain is Probable peptidoglycan glycosyltransferase FtsW from Halomonas elongata (strain ATCC 33173 / DSM 2581 / NBRC 15536 / NCIMB 2198 / 1H9).